We begin with the raw amino-acid sequence, 940 residues long: Receptor-like protein 9b (940 aa).

The signal sequence occupies residues 1–28 (MLMMFSPAFVMVMDLMVLVMMIMMMVSS). Topologically, residues 29–895 (LDAHGHISCI…GDEETTIDME (867 aa)) are extracellular. N-linked (GlcNAc...) asparagine glycans are attached at residues Asn-53, Asn-63, Asn-66, Asn-101, Asn-115, and Asn-151. 16 LRR repeats span residues 108–136 (FGEL…SFER), 137–163 (LKNL…TASS), 165–185 (KTLI…ELIN), 186–211 (LRNL…NFHN), 213–232 (QGLD…LCQL), 233–255 (KNLR…CFDS), 257–279 (TQLQ…LIRN), 281–304 (DSVE…LIAN), 306–330 (SKLK…SLQP), 331–354 (KFQL…IQHQ), 355–378 (KDLH…LLEK), 379–402 (YPNL…RLLN), 403–426 (HTLQ…IGKV), 427–450 (LPNI…SFGE), 452–475 (KDIK…FLIG), and 477–502 (SSLH…NFGS). Residues Asn-270 and Asn-304 are each glycosylated (N-linked (GlcNAc...) asparagine). N-linked (GlcNAc...) asparagine glycosylation is found at Asn-361, Asn-389, and Asn-402. N-linked (GlcNAc...) asparagine glycosylation is found at Asn-434 and Asn-463. The stretch at 503 to 522 (LVVLIANNNLFTGIADGLRN) is one LRR 17; degenerate repeat. 11 LRR repeats span residues 523 to 546 (VQSL…WFGG), 547 to 570 (FFFA…LFSK), 571 to 593 (PTFK…HFTG), 595 to 615 (DMSL…STLI), 616 to 639 (KDVL…VKNE), 641 to 662 (ILSL…LCGL), 663 to 686 (RSIR…LNNV), 752 to 776 (FNFM…LGDL), 777 to 799 (QRIR…SFSN), 801 to 824 (TDIE…LSKL), and 826 to 849 (YMVV…KFST). A glycan (N-linked (GlcNAc...) asparagine) is linked at Asn-685. N-linked (GlcNAc...) asparagine glycosylation is found at Asn-783 and Asn-799. N-linked (GlcNAc...) asparagine glycans are attached at residues Asn-831, Asn-836, Asn-867, and Asn-873. Residues 896-916 (IFYWSLAATYGVTWITFIVFL) traverse the membrane as a helical segment. At 917-940 (CFDSPWRRVWFHFVDAFISLFKCV) the chain is on the cytoplasmic side.

The protein belongs to the RLP family.

Its subcellular location is the cell membrane. This Arabidopsis thaliana (Mouse-ear cress) protein is Receptor-like protein 9b.